The chain runs to 336 residues: Glycerol-3-phosphate dehydrogenase [NAD(P)+] (336 aa).

Residues Ser-13, Trp-14, Arg-34, and Lys-108 each contribute to the NADPH site. 3 residues coordinate sn-glycerol 3-phosphate: Lys-108, Gly-138, and Ser-140. Ala-142 serves as a coordination point for NADPH. Residues Lys-193, Asp-246, Ser-256, Arg-257, and Asn-258 each coordinate sn-glycerol 3-phosphate. Lys-193 functions as the Proton acceptor in the catalytic mechanism. Arg-257 is an NADPH binding site. NADPH is bound by residues Val-281 and Glu-283.

The protein belongs to the NAD-dependent glycerol-3-phosphate dehydrogenase family.

It is found in the cytoplasm. It catalyses the reaction sn-glycerol 3-phosphate + NAD(+) = dihydroxyacetone phosphate + NADH + H(+). The enzyme catalyses sn-glycerol 3-phosphate + NADP(+) = dihydroxyacetone phosphate + NADPH + H(+). Its pathway is membrane lipid metabolism; glycerophospholipid metabolism. In terms of biological role, catalyzes the reduction of the glycolytic intermediate dihydroxyacetone phosphate (DHAP) to sn-glycerol 3-phosphate (G3P), the key precursor for phospholipid synthesis. This chain is Glycerol-3-phosphate dehydrogenase [NAD(P)+], found in Carboxydothermus hydrogenoformans (strain ATCC BAA-161 / DSM 6008 / Z-2901).